A 5478-amino-acid chain; its full sequence is Mucin-12 (5478 aa).

The N-terminal stretch at 1-16 is a signal peptide; that stretch reads MLVIWILTLALRLCAS. Over 17-5380 the chain is Extracellular; sequence VTTVTPEGSA…EFNIAKSLVY (5364 aa). N154, N170, and N176 each carry an N-linked (GlcNAc...) asparagine glycan. Residues 212–737 form a disordered region; it reads LDSSTNSGHS…GSTETTLLPD (526 aa). Repeat 1 spans residues 222–240; the sequence is EESTVSHSGPGATGTTLFP. Residues 222–4761 form a 28 X 19 AA approximate tandem repeats of E-E-S-X-X-X-H-X-X-P-X-X-T-X-T-X-X-X-P region; the sequence is EESTVSHSGP…PGSTQTMHFP (4540 aa). 4 stretches are compositionally biased toward polar residues: residues 226 to 246, 255 to 288, 296 to 313, and 325 to 342; these read VSHS…SATS, SPIT…SSPR, PART…TSHS, and DSTT…SHSI. The span at 343–366 shows a compositional bias: low complexity; that stretch reads PGSTDTTLSPGTTTPSSLGPESTT. A compositionally biased stretch (polar residues) spans 367 to 387; sequence FHSSPGYTKTTRLPDNTTTSG. The N-linked (GlcNAc...) asparagine glycan is linked to N382. The segment covering 396-413 has biased composition (low complexity); the sequence is HSSTGSPHTTLSPSSSTT. Over residues 419-440 the composition is skewed to polar residues; sequence TTFQSWPSSKDTSPAPSGTTSA. 2 stretches are compositionally biased toward low complexity: residues 445-466 and 478-495; these read STTY…SSTT and SSPV…SATS. 2 tandem repeats follow at residues 471 to 489 and 499 to 517. Residues 531-554 show a composition bias toward low complexity; it reads TFHGSTTHTKSSTPSTTAALAHTS. Polar residues-rich tracts occupy residues 555–575 and 608–648; these read YHSS…TISG and STPS…SPDT. Residues 654 to 669 are compositionally biased toward low complexity; that stretch reads SMTSSGVSEESTTSHS. Repeat unit 4 spans residues 662–680; sequence EESTTSHSRPGSTHTTAFP. 2 stretches are compositionally biased toward polar residues: residues 670-715 and 722-737; these read RPGS…TASS and TFHS…LLPD. An N-linked (GlcNAc...) asparagine glycan is attached at N738. 4 disordered regions span residues 749 to 4847, 4887 to 5034, 5048 to 5071, and 5093 to 5112; these read MPVH…HFTT, SSRS…THTV, STAF…TASD, and ASSS…TSPS. Polar residues-rich tracts occupy residues 751–783 and 792–842; these read VHSS…WPSS and TTTS…TQTM. The stretch at 827 to 845 is repeat 5; sequence EESTTYHSSPGSTQTMHFP. The segment covering 859 to 877 has biased composition (low complexity); that stretch reads TSHSSTTHTISSAPSTTSA. Polar residues-rich tracts occupy residues 884–899 and 928–970; these read SYHS…HFPD and RSTT…TTFH. Residues 971–1007 show a composition bias toward low complexity; it reads SSPRSPATTLSPASTTSSGVSEESTTSRSRPGSTHTT. The segment covering 1009-1021 has biased composition (polar residues); that stretch reads FPDSTTTPGLSRH. Residues 1022 to 1065 show a composition bias toward low complexity; that stretch reads STTSHSSPGSTDTTLLPASTTTSGPSQESTTSHSSSGSTDTALS. 2 stretches are compositionally biased toward polar residues: residues 1066 to 1101 and 1108 to 1138; these read PGST…TSSG and RVHS…TAFQ. Over residues 1139–1157 the composition is skewed to low complexity; it reads THPASTHTTPSPPSTATAP. The stretch at 1159–1177 is repeat 6; it reads EESTTYHRSPGSTPTTHFP. 2 stretches are compositionally biased toward polar residues: residues 1160–1184 and 1191–1207; these read ESTT…TTSG and IFHS…SSAH. Composition is skewed to low complexity over residues 1208-1220, 1229-1241, and 1249-1262; these read STTS…TTSR, TTLP…PGLS, and SSPR…SPAS. Composition is skewed to polar residues over residues 1271–1324, 1331–1357, and 1364–1377; these read ESTT…TTSV, TFHS…TEES, and PAST…TLTT. Composition is skewed to low complexity over residues 1384–1396 and 1411–1438; these read STTF…STGT and ESTP…SLSE. Residues 1439 to 1448 are compositionally biased toward polar residues; sequence KSTTFYTSPR. Residues 1458-1481 show a composition bias toward low complexity; it reads TTTSSGVSEESSTSHSQPGSTHTT. Repeat 7 spans residues 1466 to 1484; sequence EESSTSHSQPGSTHTTAFP. Residues 1483–1537 are compositionally biased toward polar residues; it reads FPDSTTTSDLSQEPTTSHSSQGSTEATLSPGSTTASSLGQQSTTFHSSPGDTETT. A compositionally biased stretch (low complexity) spans 1552–1568; that stretch reads STPTHSSTGSLHTTLTP. Polar residues-rich tracts occupy residues 1569–1586 and 1606–1630; these read ASST…FQSW and VSTT…TTLG. Repeat unit 8 spans residues 1633 to 1651; that stretch reads EESTTVHSSPGATGTALFP. Residues 1653-1708 show a composition bias toward polar residues; sequence RSATSVLVGEPTTSPISSGSTETTALPGSTTTAGLSEKSTTFYSSPRSPDTTLSPA. Residues 1709 to 1724 are compositionally biased toward low complexity; the sequence is STTSSGVSEESTTSHS. The stretch at 1717-1735 is repeat 9; the sequence is EESTTSHSRPGSTHTTAFP. Composition is skewed to polar residues over residues 1725–1797 and 1805–1840; these read RPGS…TTAS and PVHS…SSKD. N1793 is a glycosylation site (N-linked (GlcNAc...) asparagine). Composition is skewed to low complexity over residues 1856 to 1877 and 1889 to 1906; these read STTS…SSTT and SSPV…STTS. 2 repeat units span residues 1882-1900 and 1910-1928. Over residues 1914-1935 the composition is skewed to polar residues; sequence AYHSSPGSTQTMHFPESSTASG. Positions 1943–1959 are enriched in low complexity; that stretch reads SHSSTTHTISSPPSTTS. Composition is skewed to polar residues over residues 1967 to 1982 and 2011 to 2053; these read SYHS…HFPD and RSTT…TTFH. A compositionally biased stretch (low complexity) spans 2054-2082; it reads SSPRSPATTLSPASTTSSGVSEESTTSHS. Copy 12 of the repeat occupies 2075-2093; that stretch reads EESTTSHSRPGSTHTTAFP. Residues 2083–2104 show a composition bias toward polar residues; it reads RPGSTHTTAFPDSTTTPGLSRH. Positions 2105–2130 are enriched in low complexity; the sequence is STTSHSSPGSTDTTLLPASTTTSGPS. 2 stretches are compositionally biased toward polar residues: residues 2131-2184 and 2191-2221; these read QEST…TSSG and RVHS…TAFQ. Residues 2222–2240 show a composition bias toward low complexity; that stretch reads THPASTHTTPSPPSTATAP. The stretch at 2242 to 2260 is repeat 13; it reads EESTTYHRSPGSTPTTHFP. 2 stretches are compositionally biased toward polar residues: residues 2243-2267 and 2274-2290; these read ESTT…TTSG and IFHS…SSAH. 3 stretches are compositionally biased toward low complexity: residues 2291-2303, 2312-2324, and 2332-2345; these read STTS…TTSR, TTLP…PGLS, and SSPR…SPAS. Residues 2354 to 2392 are compositionally biased toward polar residues; it reads ESTTSRSQPGSTHSTVSPASTTTPGLSEESTTVYSSSPG. Positions 2393–2407 are enriched in low complexity; the sequence is STETTVFPRTPTTSV. Composition is skewed to polar residues over residues 2414-2440 and 2447-2460; these read TFHS…TEES and PAST…TLTT. Low complexity-rich tracts occupy residues 2467 to 2483 and 2494 to 2521; these read STTF…TLSP and ESTP…SLSE. Residues 2522-2531 show a composition bias toward polar residues; sequence KSTTFYTSPR. The segment covering 2541-2564 has biased composition (low complexity); that stretch reads TTTSSGVSEESSTSHSQPGSTHTT. Repeat 14 spans residues 2549-2567; the sequence is EESSTSHSQPGSTHTTAFP. A compositionally biased stretch (polar residues) spans 2566-2578; the sequence is FPDSTTTPGLSRH. A compositionally biased stretch (low complexity) spans 2579–2604; it reads STTSHSSPGSTDTTLLPASTTTSGPS. 2 stretches are compositionally biased toward polar residues: residues 2605–2658 and 2665–2695; these read QEST…TSSG and RVHS…TTFQ. Over residues 2696–2714 the composition is skewed to low complexity; that stretch reads THPASTHTTPSPPSTATAP. Copy 15 of the repeat occupies 2716–2734; that stretch reads EESTTYHRSPGSTPTTHFP. 2 stretches are compositionally biased toward polar residues: residues 2717–2741 and 2748–2764; these read ESTT…TTSG and IFHS…SSAH. Low complexity-rich tracts occupy residues 2765–2777, 2786–2798, and 2806–2819; these read STTS…TTSR, TTLP…PGLS, and SSPR…SPAS. 3 stretches are compositionally biased toward polar residues: residues 2828–2881, 2888–2914, and 2921–2934; these read ESTT…TTSV, TFHS…TEES, and PAST…TLTT. Low complexity-rich tracts occupy residues 2941 to 2957 and 2968 to 2995; these read STTF…TLSP and ESTP…SLSE. The span at 2996–3005 shows a compositional bias: polar residues; that stretch reads KSTTFYTSPR. Positions 3015–3038 are enriched in low complexity; it reads TTTSSGVSEESSTSHSQPGSTHTT. The stretch at 3023 to 3041 is repeat 16; the sequence is EESSTSHSQPGSTHTTAFP. Residues 3040–3094 show a composition bias toward polar residues; it reads FPDSTTTSGLSQEPTASHSSQGSTEATLSPGSTTASSLGQQSTTFHSSPGDTETT. Over residues 3109–3125 the composition is skewed to low complexity; sequence STPTHSSTGSLHTTLTP. Composition is skewed to polar residues over residues 3126–3143 and 3163–3187; these read ASST…FQSW and VSTT…TTLG. The stretch at 3190-3208 is repeat 17; that stretch reads EESTTVHSSPGATGTALFP. The segment covering 3210 to 3265 has biased composition (polar residues); it reads RSATSVLVGEPTTSPISSGSTETTALPGSTTTAGLSEKSTTFYSSPRSPDTTLSPA. Over residues 3266-3281 the composition is skewed to low complexity; the sequence is STTSSGVSEESTTSHS. Copy 18 of the repeat occupies 3274 to 3292; sequence EESTTSHSRPGSTHTTAFP. Composition is skewed to polar residues over residues 3282–3354 and 3362–3397; these read RPGS…TTAS and PVHS…NSKD. N3350 carries an N-linked (GlcNAc...) asparagine glycan. Low complexity-rich tracts occupy residues 3413 to 3434 and 3446 to 3463; these read STTS…SSTT and SSPV…STTS. Tandem repeats lie at residues 3439-3457 and 3467-3485. The span at 3468-3482 shows a compositional bias: polar residues; sequence ESTTYHSSPGSTQTM. Low complexity predominate over residues 3499-3517; sequence TSHSSTTHTISSAPSTTSA. Composition is skewed to polar residues over residues 3524–3539 and 3568–3610; these read SYHS…HFPD and RSTT…TTFH. The span at 3611 to 3639 shows a compositional bias: low complexity; the sequence is SSPRSPATTLSPASTTSSGVSEESTTSHS. Repeat 21 spans residues 3632–3650; it reads EESTTSHSRPGSTHTTAFP. Polar residues predominate over residues 3640–3661; sequence RPGSTHTTAFPDSTTTPGLSRH. A compositionally biased stretch (low complexity) spans 3662–3705; that stretch reads STTSHSSPGSTDTTLLPASTTTSGSSQESTTSHSSSGSTDTALS. Polar residues-rich tracts occupy residues 3706 to 3741 and 3748 to 3778; these read PGST…TSSG and RVHS…TAFQ. The span at 3779 to 3797 shows a compositional bias: low complexity; sequence THPASTHTTPSPPSTATAP. Repeat 22 spans residues 3799–3817; the sequence is EESTTYHRSPGSTPTTHFP. Composition is skewed to polar residues over residues 3800 to 3824 and 3831 to 3847; these read ESTT…TTSG and IFHS…SSAH. Low complexity-rich tracts occupy residues 3848–3860, 3869–3881, and 3889–3902; these read STTS…TTSR, TTLP…PGLS, and SSPR…SPAS. Polar residues-rich tracts occupy residues 3911 to 3963, 3971 to 3997, and 4004 to 4017; these read ESTT…TTTS, TFHS…TEES, and PAST…TLTT. 2 stretches are compositionally biased toward low complexity: residues 4024 to 4036 and 4051 to 4078; these read STTF…STGT and ESTP…SLSE. Residues 4079-4088 show a composition bias toward polar residues; sequence KSTTFYTSPR. The segment covering 4098–4121 has biased composition (low complexity); that stretch reads TTTSSGVSEESSTSHSQPGSTHTT. The stretch at 4106 to 4124 is repeat 23; it reads EESSTSHSQPGSTHTTAFP. Residues 4123–4177 show a composition bias toward polar residues; that stretch reads FPDSTTTSGLSQEPTTSHSSQGSTEATLSPGSTTASSLGQQSTTFHSSPGDTETT. Low complexity predominate over residues 4192 to 4208; that stretch reads STPTHSSTGSLHTTLTP. The segment covering 4209-4226 has biased composition (polar residues); it reads ASSTSTGLQEESTTFQSW. The segment covering 4227-4249 has biased composition (low complexity); the sequence is PSSSDTTPSPPSTTAVPVEVSTT. Over residues 4250–4270 the composition is skewed to polar residues; the sequence is YHSRPSSTPTTHFSASSTTLG. Repeat unit 24 spans residues 4273-4291; it reads EESTTVHSSPGATGTALFP. Polar residues predominate over residues 4293–4348; that stretch reads RSATSVLVGEPTTSPISSGSTETTALPGSTTTAGLSEKSTTFYSSPRSPDTTLSPA. A compositionally biased stretch (low complexity) spans 4349 to 4364; sequence STTSSGVSEESTTSHS. Polar residues-rich tracts occupy residues 4369–4437 and 4445–4480; these read MHTT…TTAS and PVHS…NSKD. N4433 carries an N-linked (GlcNAc...) asparagine glycan. Low complexity-rich tracts occupy residues 4496–4517 and 4529–4546; these read STTS…SSTT and SSPV…STTS. 2 repeat units span residues 4522-4540 and 4550-4568. The segment covering 4551–4571 has biased composition (polar residues); the sequence is ESTTYHSSPGSTQTMHFPESN. The N-linked (GlcNAc...) asparagine glycan is linked to N4571. Positions 4582-4600 are enriched in low complexity; the sequence is TSHSSTTHTISSAPSTTSA. 2 stretches are compositionally biased toward polar residues: residues 4607-4622 and 4651-4688; these read SYHS…HFPD and RSTT…LSEK. 2 stretches are compositionally biased toward low complexity: residues 4689-4710 and 4722-4739; these read STTF…SSTT and SSPV…STTS. A run of 2 repeats spans residues 4715–4733 and 4743–4761. Residues 4747–4768 are compositionally biased toward polar residues; it reads AYHSSPGSTQTMHFPESSTASG. The span at 4776 to 4792 shows a compositional bias: low complexity; it reads SHSSTTHTISSPPSTTS. Polar residues-rich tracts occupy residues 4800–4814 and 4887–4917; these read SYHS…THFP and SSRS…SQAE. Residues 4918-4931 show a composition bias toward low complexity; the sequence is STHTTAFPASTTTS. Polar residues-rich tracts occupy residues 4932-5024 and 5048-5061; these read GLSQ…STPF and STAF…TGTT. A compositionally biased stretch (low complexity) spans 5094-5112; that stretch reads SSSTSGLTEESTTFHTSPS. Residues 5116-5154 enclose the EGF-like domain; that stretch reads TIVSTESLETLAPGLCQEGQIWNGKQCVCPQGYVGYQCL. The cysteines at positions 5144 and 5153 are disulfide-linked. The 108-residue stretch at 5168–5275 folds into the SEA domain; sequence LNATLGMTVK…TRTTLLDPDS (108 aa). N-linked (GlcNAc...) asparagine glycans are attached at residues N5169, N5182, N5197, N5228, and N5264. The Cleavage motif signature appears at 5226–5233; that stretch reads LLNGSIVV. A helical membrane pass occupies residues 5381–5401; the sequence is GIVGAVMAVLLLALIILIILF. Over 5402-5478 the chain is Cytoplasmic; that stretch reads SLSQRKRHRE…QRPEMVASTV (77 aa).

Ubiquitous, with higher expression in colon. Down-regulated in colorectal cancer as well as in the colon of patients with ulcerative colitis (UC) and Crohn's disease (CD).

It localises to the membrane. Involved in epithelial cell protection, adhesion modulation, and signaling. May be involved in epithelial cell growth regulation. Stimulated by both cytokine TNF-alpha and TGF-beta in intestinal epithelium. This Homo sapiens (Human) protein is Mucin-12 (MUC12).